A 225-amino-acid chain; its full sequence is Single-pass membrane and coiled-coil domain-containing protein 3 (225 aa).

The stretch at 62–92 forms a coiled coil; that stretch reads IKENCDLIIQAIMKIQKELQKVDEALKDKLE. The helical transmembrane segment at 155 to 175 threads the bilayer; that stretch reads IGASLLGSIGVAVLGLGIDMI. Residues 183–207 are a coiled coil; it reads VEKTQLQAAIKSYEKHLVEFKSASE.

It is found in the membrane. The sequence is that of Single-pass membrane and coiled-coil domain-containing protein 3 (SMCO3) from Homo sapiens (Human).